The chain runs to 312 residues: Putative HTH-type transcriptional regulatory protein Ta1363 (312 aa).

The 54-residue stretch at 133–186 (LREMRMKMSLSIGYLSHYLGVSRRSVSLYENGSSATIDVFLKLQEIIKSDLVDH) folds into the HTH cro/C1-type domain. Positions 144-163 (IGYLSHYLGVSRRSVSLYEN) form a DNA-binding region, H-T-H motif.

The polypeptide is Putative HTH-type transcriptional regulatory protein Ta1363 (Thermoplasma acidophilum (strain ATCC 25905 / DSM 1728 / JCM 9062 / NBRC 15155 / AMRC-C165)).